Consider the following 398-residue polypeptide: LL-diaminopimelate aminotransferase (398 aa).

Substrate-binding residues include Tyr-14 and Gly-41. Residues Tyr-71, 104–105 (AK), Tyr-128, Asn-174, Tyr-205, and 233–235 (SFS) contribute to the pyridoxal 5'-phosphate site. Residues Lys-105, Tyr-128, and Asn-174 each coordinate substrate. Lys-236 is subject to N6-(pyridoxal phosphate)lysine. The pyridoxal 5'-phosphate site is built by Arg-244 and Asn-275. Substrate-binding residues include Asn-275 and Arg-368.

Belongs to the class-I pyridoxal-phosphate-dependent aminotransferase family. LL-diaminopimelate aminotransferase subfamily. Homodimer. Pyridoxal 5'-phosphate serves as cofactor.

It carries out the reaction (2S,6S)-2,6-diaminopimelate + 2-oxoglutarate = (S)-2,3,4,5-tetrahydrodipicolinate + L-glutamate + H2O + H(+). It functions in the pathway amino-acid biosynthesis; L-lysine biosynthesis via DAP pathway; LL-2,6-diaminopimelate from (S)-tetrahydrodipicolinate (aminotransferase route): step 1/1. Functionally, involved in the synthesis of meso-diaminopimelate (m-DAP or DL-DAP), required for both lysine and peptidoglycan biosynthesis. Catalyzes the direct conversion of tetrahydrodipicolinate to LL-diaminopimelate. This is LL-diaminopimelate aminotransferase from Chlamydia felis (strain Fe/C-56) (Chlamydophila felis).